The chain runs to 221 residues: MQIYQPHPWPLTVEEAITIQEELRHQVITQDQFTQPVQYVAGVDMGFEADGTISRAAVAVLSFPDLQVVETSLAYRPTSFPYIPGFLSFREIPAVLDALEKIQTKPDIILCDGQGIAHPRRLGIASHLGVLLNIPTIGVAKSLLIGRHEELADTKGSWQPLIHRGEIIGAVLRTRVGVKPVYVSSGHKISLPTAIDYVLRCTPKYRLPETTRVADKLASNR.

The Mg(2+) site is built by Asp-44 and Asp-112.

Belongs to the endonuclease V family. The cofactor is Mg(2+).

The protein localises to the cytoplasm. It carries out the reaction Endonucleolytic cleavage at apurinic or apyrimidinic sites to products with a 5'-phosphate.. Its function is as follows. DNA repair enzyme involved in the repair of deaminated bases. Selectively cleaves double-stranded DNA at the second phosphodiester bond 3' to a deoxyinosine leaving behind the intact lesion on the nicked DNA. The chain is Endonuclease V from Trichormus variabilis (strain ATCC 29413 / PCC 7937) (Anabaena variabilis).